A 212-amino-acid chain; its full sequence is Probable nicotinate-nucleotide adenylyltransferase (212 aa).

The protein belongs to the NadD family.

The enzyme catalyses nicotinate beta-D-ribonucleotide + ATP + H(+) = deamido-NAD(+) + diphosphate. It participates in cofactor biosynthesis; NAD(+) biosynthesis; deamido-NAD(+) from nicotinate D-ribonucleotide: step 1/1. In terms of biological role, catalyzes the reversible adenylation of nicotinate mononucleotide (NaMN) to nicotinic acid adenine dinucleotide (NaAD). The chain is Probable nicotinate-nucleotide adenylyltransferase from Methylibium petroleiphilum (strain ATCC BAA-1232 / LMG 22953 / PM1).